The chain runs to 275 residues: ADP-dependent (S)-NAD(P)H-hydrate dehydratase (275 aa).

The YjeF C-terminal domain maps to 5–273; sequence TDEILAKVIK…EEIPLFMKKY (269 aa). (6S)-NADPHX-binding residues include A40, G103, and H151. G214 is an AMP binding site. D215 contributes to the (6S)-NADPHX binding site.

This sequence belongs to the NnrD/CARKD family. In terms of assembly, homotetramer. The cofactor is Mg(2+).

It catalyses the reaction (6S)-NADHX + ADP = AMP + phosphate + NADH + H(+). The catalysed reaction is (6S)-NADPHX + ADP = AMP + phosphate + NADPH + H(+). Catalyzes the dehydration of the S-form of NAD(P)HX at the expense of ADP, which is converted to AMP. Together with NAD(P)HX epimerase, which catalyzes the epimerization of the S- and R-forms, the enzyme allows the repair of both epimers of NAD(P)HX, a damaged form of NAD(P)H that is a result of enzymatic or heat-dependent hydration. The polypeptide is ADP-dependent (S)-NAD(P)H-hydrate dehydratase (Lactococcus lactis subsp. lactis (strain IL1403) (Streptococcus lactis)).